The chain runs to 143 residues: Transcriptional regulator MraZ (143 aa).

SpoVT-AbrB domains follow at residues 5–47 and 76–119; these read TYTP…PREE and ADEQ…DAAA.

This sequence belongs to the MraZ family. As to quaternary structure, forms oligomers.

It localises to the cytoplasm. It is found in the nucleoid. The polypeptide is Transcriptional regulator MraZ (Corynebacterium diphtheriae (strain ATCC 700971 / NCTC 13129 / Biotype gravis)).